The primary structure comprises 396 residues: Acetate kinase (396 aa).

Residue N7 coordinates Mg(2+). K14 provides a ligand contact to ATP. R88 lines the substrate pocket. The Proton donor/acceptor role is filled by D145. Residues H203–G207, D278–R280, and G326–N330 each bind ATP. Mg(2+) is bound at residue E379.

The protein belongs to the acetokinase family. Homodimer. Mg(2+) serves as cofactor. Requires Mn(2+) as cofactor.

The protein resides in the cytoplasm. It carries out the reaction acetate + ATP = acetyl phosphate + ADP. It participates in metabolic intermediate biosynthesis; acetyl-CoA biosynthesis; acetyl-CoA from acetate: step 1/2. Its function is as follows. Catalyzes the formation of acetyl phosphate from acetate and ATP. Can also catalyze the reverse reaction. The sequence is that of Acetate kinase from Phytoplasma australiense.